Consider the following 156-residue polypeptide: Acyl carrier protein, mitochondrial (156 aa).

Residues 1–68 constitute a mitochondrion transit peptide; the sequence is MASRVLSAYV…GRVTQLCRQY (68 aa). Positions 77-152 constitute a Carrier domain; it reads EGIQDRVLYV…EIVDYIADKK (76 aa). The residue at position 88 (Lys-88) is an N6-acetyllysine. Ser-112 carries the post-translational modification O-(pantetheine 4'-phosphoryl)serine.

Belongs to the acyl carrier protein (ACP) family. In terms of assembly, mammalian complex I is composed of 45 different subunits. Interacts with ETFRF1. Identified in a complex composed of MALSU1, MIEF1 upstream open reading frame protein and NDUFAB1; within the trimeric complex, MIEF1 upstream open reading frame protein functions as a bridging scaffold that interacts with MALSU1 on one side, and with NDUFAB1 on the other side. The complex interacts with the mitochondrial large ribosomal subunit. Interacts with alpha-1-microglobulin chain; this interaction is required for the maintenance of mitochondrial redox homeostasis. Component of the mitochondrial core iron-sulfur cluster (ISC) complex composed of NFS1, LYRM4, NDUFAB1, ISCU, FXN, and FDX2; this complex is a heterohexamer containing two copies of each monomer. Component of the cyteine desulfurase complex composed of NFS1, LYRM4 and NDUFAB1; this complex contributes to the stability and cysteine desulfurase activity of NFS1. In terms of processing, phosphopantetheinylation at Ser-112 is essential for interactions with LYR motif-containing proteins.

The protein localises to the mitochondrion. In terms of biological role, carrier of the growing fatty acid chain in fatty acid biosynthesis. Accessory and non-catalytic subunit of the mitochondrial membrane respiratory chain NADH dehydrogenase (Complex I), which functions in the transfer of electrons from NADH to the respiratory chain. Accessory protein, of the core iron-sulfur cluster (ISC) assembly complex, that regulates, in association with LYRM4, the stability and the cysteine desulfurase activity of NFS1 and participates in the [2Fe-2S] clusters assembly on the scaffolding protein ISCU. The core iron-sulfur cluster (ISC) assembly complex is involved in the de novo synthesis of a [2Fe-2S] cluster, the first step of the mitochondrial iron-sulfur protein biogenesis. This process is initiated by the cysteine desulfurase complex (NFS1:LYRM4:NDUFAB1) that produces persulfide which is delivered on the scaffold protein ISCU in a FXN-dependent manner. Then this complex is stabilized by FDX2 which provides reducing equivalents to accomplish the [2Fe-2S] cluster assembly. Finally, the [2Fe-2S] cluster is transferred from ISCU to chaperone proteins, including HSCB, HSPA9 and GLRX5. This Gorilla gorilla gorilla (Western lowland gorilla) protein is Acyl carrier protein, mitochondrial.